Reading from the N-terminus, the 353-residue chain is Chorismate synthase (353 aa).

2 residues coordinate NADP(+): Arg-48 and Arg-54. FMN-binding positions include Arg-125–Ser-127, Asn-238–Ala-239, Gly-278, Lys-293–Ser-297, and Arg-319.

This sequence belongs to the chorismate synthase family. In terms of assembly, homotetramer. It depends on FMNH2 as a cofactor.

The enzyme catalyses 5-O-(1-carboxyvinyl)-3-phosphoshikimate = chorismate + phosphate. It functions in the pathway metabolic intermediate biosynthesis; chorismate biosynthesis; chorismate from D-erythrose 4-phosphate and phosphoenolpyruvate: step 7/7. Its function is as follows. Catalyzes the anti-1,4-elimination of the C-3 phosphate and the C-6 proR hydrogen from 5-enolpyruvylshikimate-3-phosphate (EPSP) to yield chorismate, which is the branch point compound that serves as the starting substrate for the three terminal pathways of aromatic amino acid biosynthesis. This reaction introduces a second double bond into the aromatic ring system. The protein is Chorismate synthase of Bordetella parapertussis (strain 12822 / ATCC BAA-587 / NCTC 13253).